The primary structure comprises 459 residues: Probable multidrug resistance protein NorM (459 aa).

A run of 12 helical transmembrane segments spans residues 12–31, 46–68, 89–111, 121–143, 155–177, 187–209, 244–266, 281–303, 316–335, 350–372, 385–407, and 417–439; these read IQLA…MGFI, AVAV…LMAF, FQGA…SAPL, QLYN…FVLY, YTLP…NYIF, MGGA…AMAI, IAMA…APLG, AIVF…YYLG, VGLL…TVLF, VVLA…VQVV, SAFY…TLAY, and AHGF…FIRL.

Belongs to the multi antimicrobial extrusion (MATE) (TC 2.A.66.1) family.

The protein localises to the cell inner membrane. Multidrug efflux pump. The chain is Probable multidrug resistance protein NorM (norM) from Shewanella oneidensis (strain ATCC 700550 / JCM 31522 / CIP 106686 / LMG 19005 / NCIMB 14063 / MR-1).